Reading from the N-terminus, the 506-residue chain is UBX domain-containing protein 4 (506 aa).

The interval 1 to 199 (MLWFQGAIPA…PAEDLTVRVE (199 aa)) is interaction with UBQLN1. Over 1 to 411 (MLWFQGAIPA…VPSSSGDIWT (411 aa)) the chain is Cytoplasmic. Polar residues-rich tracts occupy residues 114–136 (SLKG…TPSA) and 177–189 (SLSQ…SNQR). A disordered region spans residues 114-193 (SLKGETSVTN…GCSNQRPAED (80 aa)). Positions 313 to 391 (DRSTIARIQF…ELAPSASVVL (79 aa)) constitute a UBX domain. Residues 412-432 (LLGTVLYPFLAIWRLISNFLF) lie within the membrane without spanning it. Residues 433–506 (SNPPPAQTSA…TWNGNSTQQM (74 aa)) are Cytoplasmic-facing. Positions 437 to 506 (PAQTSARATS…TWNGNSTQQM (70 aa)) are disordered. Residues 444 to 456 (ATSTEPSNSASSS) are compositionally biased toward low complexity. The segment covering 457–489 (KSEKREPVRKRVLEKRGEDFKKEGKIYRLRTQD) has biased composition (basic and acidic residues). At T487 the chain carries Phosphothreonine. Residues 496 to 506 (NTWNGNSTQQM) show a composition bias toward polar residues.

In terms of assembly, directly interacts with VCP. Interacts with UBQLN1. Forms a complex with VCP and UBQLN1.

Its subcellular location is the endoplasmic reticulum membrane. It is found in the nucleus envelope. Functionally, involved in endoplasmic reticulum-associated protein degradation (ERAD). Acts as a platform to recruit both UBQLN1 and VCP to the ER during ERAD. This is UBX domain-containing protein 4 (Ubxn4) from Rattus norvegicus (Rat).